A 324-amino-acid polypeptide reads, in one-letter code: Glyoxylate/hydroxypyruvate reductase B (324 aa).

Residues R237 and E266 contribute to the active site. H285 (proton donor) is an active-site residue.

Belongs to the D-isomer specific 2-hydroxyacid dehydrogenase family. GhrB subfamily. As to quaternary structure, homodimer.

It is found in the cytoplasm. The catalysed reaction is glycolate + NADP(+) = glyoxylate + NADPH + H(+). It carries out the reaction (R)-glycerate + NAD(+) = 3-hydroxypyruvate + NADH + H(+). It catalyses the reaction (R)-glycerate + NADP(+) = 3-hydroxypyruvate + NADPH + H(+). In terms of biological role, catalyzes the NADPH-dependent reduction of glyoxylate and hydroxypyruvate into glycolate and glycerate, respectively. The protein is Glyoxylate/hydroxypyruvate reductase B of Shigella sonnei (strain Ss046).